A 123-amino-acid chain; its full sequence is Large ribosomal subunit protein uL18 (123 aa).

Belongs to the universal ribosomal protein uL18 family. In terms of assembly, part of the 50S ribosomal subunit; part of the 5S rRNA/L5/L18/L25 subcomplex. Contacts the 5S and 23S rRNAs.

This is one of the proteins that bind and probably mediate the attachment of the 5S RNA into the large ribosomal subunit, where it forms part of the central protuberance. This is Large ribosomal subunit protein uL18 from Chlamydia muridarum (strain MoPn / Nigg).